The chain runs to 459 residues: Phosphoglucosamine mutase (459 aa).

The active-site Phosphoserine intermediate is the Ser-100. The Mg(2+) site is built by Ser-100, Asp-256, Asp-258, and Asp-260. Phosphoserine is present on Ser-100.

It belongs to the phosphohexose mutase family. The cofactor is Mg(2+). In terms of processing, activated by phosphorylation.

It carries out the reaction alpha-D-glucosamine 1-phosphate = D-glucosamine 6-phosphate. Catalyzes the conversion of glucosamine-6-phosphate to glucosamine-1-phosphate. The sequence is that of Phosphoglucosamine mutase from Heliobacterium modesticaldum (strain ATCC 51547 / Ice1).